The chain runs to 339 residues: Uroporphyrinogen decarboxylase (339 aa).

Residues 21–25, phenylalanine 40, aspartate 71, tyrosine 147, serine 202, and histidine 315 each bind substrate; that span reads RQAGR.

It belongs to the uroporphyrinogen decarboxylase family. In terms of assembly, homodimer.

The protein resides in the cytoplasm. The enzyme catalyses uroporphyrinogen III + 4 H(+) = coproporphyrinogen III + 4 CO2. It participates in porphyrin-containing compound metabolism; protoporphyrin-IX biosynthesis; coproporphyrinogen-III from 5-aminolevulinate: step 4/4. Catalyzes the decarboxylation of four acetate groups of uroporphyrinogen-III to yield coproporphyrinogen-III. The protein is Uroporphyrinogen decarboxylase of Helicobacter pylori (strain J99 / ATCC 700824) (Campylobacter pylori J99).